A 356-amino-acid polypeptide reads, in one-letter code: UDP-N-acetylglucosamine--N-acetylmuramyl-(pentapeptide) pyrophosphoryl-undecaprenol N-acetylglucosamine transferase (356 aa).

UDP-N-acetyl-alpha-D-glucosamine contacts are provided by residues 14–16 (TGG), asparagine 126, arginine 162, serine 190, isoleucine 244, and glutamine 289.

The protein belongs to the glycosyltransferase 28 family. MurG subfamily.

It localises to the cell inner membrane. The enzyme catalyses di-trans,octa-cis-undecaprenyl diphospho-N-acetyl-alpha-D-muramoyl-L-alanyl-D-glutamyl-meso-2,6-diaminopimeloyl-D-alanyl-D-alanine + UDP-N-acetyl-alpha-D-glucosamine = di-trans,octa-cis-undecaprenyl diphospho-[N-acetyl-alpha-D-glucosaminyl-(1-&gt;4)]-N-acetyl-alpha-D-muramoyl-L-alanyl-D-glutamyl-meso-2,6-diaminopimeloyl-D-alanyl-D-alanine + UDP + H(+). It functions in the pathway cell wall biogenesis; peptidoglycan biosynthesis. Cell wall formation. Catalyzes the transfer of a GlcNAc subunit on undecaprenyl-pyrophosphoryl-MurNAc-pentapeptide (lipid intermediate I) to form undecaprenyl-pyrophosphoryl-MurNAc-(pentapeptide)GlcNAc (lipid intermediate II). In Cupriavidus necator (strain ATCC 17699 / DSM 428 / KCTC 22496 / NCIMB 10442 / H16 / Stanier 337) (Ralstonia eutropha), this protein is UDP-N-acetylglucosamine--N-acetylmuramyl-(pentapeptide) pyrophosphoryl-undecaprenol N-acetylglucosamine transferase.